The primary structure comprises 78 residues: Hainantoxin-XX.3 (78 aa).

A signal peptide spans 1-23 (MKSATLLALSFLLIASCFLICEA). A propeptide spanning residues 24–47 (EHSRYEEHEILEENMGDVVNLEQR) is cleaved from the precursor. 3 disulfide bridges follow: Cys49–Cys62, Cys56–Cys66, and Cys61–Cys77.

It belongs to the hainantoxin family. 20 subfamily. As to expression, expressed by the venom gland.

Its subcellular location is the secreted. Its function is as follows. Putative ion channel inhibitor. The sequence is that of Hainantoxin-XX.3 from Cyriopagopus hainanus (Chinese bird spider).